The sequence spans 286 residues: Spermidine/putrescine transport system permease protein PotB (286 aa).

Residues 1 to 13 (MKIINNKFQKITV) are Cytoplasmic-facing. Residues 14–33 (AIIFSWLIFFVLIPNLLVLA) form a helical membrane-spanning segment. Topologically, residues 34 to 71 (VSFLTRDGSNFYAFPITIENYTNLFNPLYAQVVWNSLS) are periplasmic. The ABC transmembrane type-1 domain occupies 66 to 274 (VWNSLSMSGI…MALLIFVYYR (209 aa)). The helical transmembrane segment at 72–91 (MSGIATIICLLIGYPFAFMM) threads the bilayer. At 92 to 100 (SKIHPKYRP) the chain is on the cytoplasmic side. A helical membrane pass occupies residues 101–120 (LLLFLVVLPFWTNSLIRIYG). The Periplasmic portion of the chain corresponds to 121 to 151 (MKVFLGVKGILNTMLIDMGILSAPIRILNTE). Residues 152–171 (IAVIIGLVYLLLPFMILPLY) traverse the membrane as a helical segment. Over 172-199 (SAIEKLDNRLLEAARDLGANTFQRFFRV) the chain is Cytoplasmic. A helical transmembrane segment spans residues 200-219 (ILPLTMPGIIAGCLLVLLPA). Over 220-252 (MGMFYVADLLGGAKVLLVGNVIKSEFLISRNWP) the chain is Periplasmic. Residues 253–272 (FGSAVSIGLTVLMALLIFVY) traverse the membrane as a helical segment. Over 273 to 286 (YRANKLLNRKVELE) the chain is Cytoplasmic.

Belongs to the binding-protein-dependent transport system permease family. CysTW subfamily.

The protein resides in the cell inner membrane. Its function is as follows. Required for the activity of the bacterial periplasmic transport system of putrescine and spermidine. In Haemophilus influenzae (strain ATCC 51907 / DSM 11121 / KW20 / Rd), this protein is Spermidine/putrescine transport system permease protein PotB (potB).